Here is a 1168-residue protein sequence, read N- to C-terminus: Homeodomain-interacting protein kinase 2 (1168 aa).

Serine 16 is subject to Phosphoserine. Lysine 32 participates in a covalent cross-link: Glycyl lysine isopeptide (Lys-Gly) (interchain with G-Cter in SUMO); alternate. A Glycyl lysine isopeptide (Lys-Gly) (interchain with G-Cter in SUMO2); alternate cross-link involves residue lysine 32. A transcriptional corepression region spans residues 97-230 (SASSTSVTGQ…TNEIVAIKIL (134 aa)). 2 positions are modified to phosphoserine: serine 118 and serine 135. At threonine 141 the chain carries Phosphothreonine. Residues 189–520 (HEVLCSMTNT…DADKRITPIE (332 aa)) form an interaction with DAXX region. The Protein kinase domain maps to 199-527 (YEVLEFLGRG…PIETLNHPFV (329 aa)). ATP-binding positions include 205 to 213 (LGRGTFGQV) and lysine 228. Residues threonine 252 and threonine 273 each carry the phosphothreonine modification. Catalysis depends on aspartate 324, which acts as the Proton acceptor. Phosphotyrosine is present on tyrosine 361. Serine 441 carries the post-translational modification Phosphoserine. Phosphothreonine is present on residues threonine 482, threonine 517, and threonine 566. Residues 539–816 (THVKSCFQNM…KENTPPRCAM (278 aa)) form an interaction with SKI and SMAD1 region. The interaction with DAZAP2 stretch occupies residues 595-772 (PSAASMAAVA…MRQQPTSTTS (178 aa)). Serine 607 and serine 641 each carry phosphoserine. Position 660 is a phosphothreonine (threonine 660). The segment at 724 to 869 (RNTHAHGSHY…ITISSDTDEE (146 aa)) is interaction with POU4F1. Residues 746 to 848 (HVTLPAAQPL…TRERQRQTIV (103 aa)) form an interaction with CTBP1 region. The interaction with HMGA1 stretch occupies residues 759–869 (VAHVMRQQPT…ITISSDTDEE (111 aa)). Positions 764 to 820 (RQQPTSTTSSRKSKQHQPSMRNVSTCEVTSSQSTSSPQRSKRVKENTPPRCAMVHSS) are disordered. A compositionally biased stretch (polar residues) spans 765 to 791 (QQPTSTTSSRKSKQHQPSMRNVSTCEV). The Nuclear localization signal 1 (NLS1) motif lies at 774-777 (RKSK). 2 positions are modified to phosphoserine: serine 787 and serine 799. Over residues 792-801 (TSSQSTSSPQ) the composition is skewed to low complexity. The Nuclear localization signal 2 (NLS2) signature appears at 804–807 (KRVK). Residues 812–907 (PRCAMVHSSP…YSDSSSNTSP (96 aa)) form an interaction with TP53 and TP73 region. An interaction with UBE2I region spans residues 845 to 879 (QTIVIPDTPSPTVSVITISSDTDEEEEQKHAPTST). The tract at residues 845 to 952 (QTIVIPDTPS…PLKTQASEVL (108 aa)) is localization to nuclear speckles. The interval 845 to 952 (QTIVIPDTPS…PLKTQASEVL (108 aa)) is required for localization to nuclear speckles. The tract at residues 854 to 876 (SPTVSVITISSDTDEEEEQKHAP) is interaction with UBL1. The segment at 856–880 (TVSVITISSDTDEEEEQKHAPTSTV) is SUMO interaction motifs (SIM); required for nuclear localization and kinase activity. Residues 894–936 (HDSPYSDSSSNTSPYSVQQRTGHNGTNTLDTKGALENHCTGNP) form a disordered region. Positions 895–909 (DSPYSDSSSNTSPYS) are enriched in low complexity. Serine 906 carries the post-translational modification Phosphoserine. The interval 907-1022 (PYSVQQRTGH…LSQAQPHMAT (116 aa)) is interaction with AXIN1. The span at 910-923 (VQQRTGHNGTNTLD) shows a compositional bias: polar residues. Residues lysine 925 and lysine 945 each participate in a glycyl lysine isopeptide (Lys-Gly) (interchain with G-Cter in SUMO2) cross-link. The tract at residues 956–1168 (DSLGPAVSTG…PAKVNQYPYI (213 aa)) is autoinhibitory domain (AID). The interval 960 to 1030 (PAVSTGHHSS…ATDRTGSHRR (71 aa)) is disordered. The residue at position 963 (serine 963) is a Phosphoserine. 2 stretches are compositionally biased toward low complexity: residues 965-991 (GHHSSSFKCKSSSTVTSTSGHSSGSSS) and 998-1018 (QQRPGPHFQQQQPLNLSQAQP). Phosphoserine is present on residues serine 1014, serine 1125, and serine 1158. A Glycyl lysine isopeptide (Lys-Gly) (interchain with G-Cter in SUMO) cross-link involves residue lysine 1161.

This sequence belongs to the protein kinase superfamily. CMGC Ser/Thr protein kinase family. HIPK subfamily. In terms of assembly, interacts with CREB1, SIAH1, WSB1, CBX4, TRADD, p53/TP53, TP73, TP63, CREBBP, DAXX, P53DINP1, SKI, SMAD1, SMAD2 and SMAD3, but not SMAD4. Interacts with ATF1, PML, RUNX1, EP300, NKX1-2, NKX2-5, UBE2I, HMGA1, CTBP1, AXIN1, NLK, MYB, POU4F1, POU4F2, POU4F3, UBE2I, UBL1 and ZBTB4. Probably part of a complex consisting of p53/TP53, HIPK2 and AXIN1. Interacts with SP100; positively regulates TP53-dependent transcription. Interacts with DAZAP2; the interaction results in phosphorylation of DAZAP2 which causes localization of DAZAP2 to the nucleus, reduces interaction of DAZAP2 with HIPK2 and prevents DAZAP2-dependent degradation of HIPK2. Interacts with SIAH1; the interaction is promoted by DAZAP2 and results in SIAH1-mediated ubiquitination and subsequent proteasomal degradation of HIPK2. Post-translationally, autophosphorylation at Tyr-361 in the activation loop activates the kinase and promotes nuclear localization. Sumoylated. When conjugated it is directed to nuclear speckles. Desumoylated by SENP1. Sumoylation on Lys-32 is promoted by the E3 SUMO-protein ligase CBX4. In terms of processing, ubiquitinated by FBXO3, WSB1 and SIAH1, leading to rapid proteasome-dependent degradation. The degradation mediated by FBXO3, but not ubiquitination, is prevented in the presence of PML. The degradation mediated by WSB1 and SIAH1 is reversibly reduced upon DNA damage. Post-translationally, cleaved at Asp-895 and Asp-956 by CASP6 in a p53/TP53-dependent manner. The cleaved form lacks the autoinhibitory C-terminal domain (AID), resulting in a hyperactive kinase, which potentiates p53/TP53 Ser-46 phosphorylation and subsequent activation of the cell death machinery.

The protein resides in the nucleus. Its subcellular location is the PML body. It is found in the cytoplasm. It carries out the reaction L-seryl-[protein] + ATP = O-phospho-L-seryl-[protein] + ADP + H(+). The catalysed reaction is L-threonyl-[protein] + ATP = O-phospho-L-threonyl-[protein] + ADP + H(+). In terms of biological role, serine/threonine-protein kinase involved in transcription regulation, p53/TP53-mediated cellular apoptosis and regulation of the cell cycle. Acts as a corepressor of several transcription factors, including SMAD1 and POU4F1/Brn3a and probably NK homeodomain transcription factors. Phosphorylates PDX1, ATF1, PML, p53/TP53, CREB1, CTBP1, CBX4, RUNX1, EP300, CTNNB1, HMGA1, ZBTB4 and DAZAP2. Inhibits cell growth and promotes apoptosis through the activation of p53/TP53 both at the transcription level and at the protein level (by phosphorylation and indirect acetylation). The phosphorylation of p53/TP53 may be mediated by a p53/TP53-HIPK2-AXIN1 complex. Involved in the response to hypoxia by acting as a transcriptional co-suppressor of HIF1A. Mediates transcriptional activation of TP73. In response to TGFB, cooperates with DAXX to activate JNK. Negative regulator through phosphorylation and subsequent proteasomal degradation of CTNNB1 and the antiapoptotic factor CTBP1. In the Wnt/beta-catenin signaling pathway acts as an intermediate kinase between MAP3K7/TAK1 and NLK to promote the proteasomal degradation of MYB. Phosphorylates CBX4 upon DNA damage and promotes its E3 SUMO-protein ligase activity. Activates CREB1 and ATF1 transcription factors by phosphorylation in response to genotoxic stress. In response to DNA damage, stabilizes PML by phosphorylation. PML, HIPK2 and FBXO3 may act synergically to activate p53/TP53-dependent transactivation. Promotes angiogenesis, and is involved in erythroid differentiation, especially during fetal liver erythropoiesis. Phosphorylation of RUNX1 and EP300 stimulates EP300 transcription regulation activity. Triggers ZBTB4 protein degradation in response to DNA damage. In response to DNA damage, phosphorylates DAZAP2 which localizes DAZAP2 to the nucleus, reduces interaction of DAZAP2 with HIPK2 and prevents DAZAP2-dependent ubiquitination of HIPK2 by E3 ubiquitin-protein ligase SIAH1 and subsequent proteasomal degradation. Modulates HMGA1 DNA-binding affinity. In response to high glucose, triggers phosphorylation-mediated subnuclear localization shifting of PDX1. Involved in the regulation of eye size, lens formation and retinal lamination during late embryogenesis. The sequence is that of Homeodomain-interacting protein kinase 2 (Hipk2) from Mesocricetus auratus (Golden hamster).